The following is a 596-amino-acid chain: Malto-oligosyltrehalose trehalohydrolase (596 aa).

Arg263–His268 is a binding site for substrate. Asp265 serves as the catalytic Nucleophile. Glu302 acts as the Proton donor in catalysis. Residues Asp327 to His331 and His397 to Asn402 contribute to the substrate site.

The protein belongs to the glycosyl hydrolase 13 family.

It is found in the cytoplasm. The catalysed reaction is hydrolysis of (1-&gt;4)-alpha-D-glucosidic linkage in 4-alpha-D-[(1-&gt;4)-alpha-D-glucanosyl]n trehalose to yield trehalose and (1-&gt;4)-alpha-D-glucan.. Its pathway is glycan biosynthesis; trehalose biosynthesis. The protein is Malto-oligosyltrehalose trehalohydrolase (treZ) of Rhizobium sp. (strain M-11).